We begin with the raw amino-acid sequence, 911 residues long: Protein transport protein SEC24-1 (911 aa).

Over residues 108-123 (QPLPQQQQQQQQQQGP) the composition is skewed to low complexity. Residues 108–130 (QPLPQQQQQQQQQQGPAKPPKPM) form a disordered region. The Zn(2+) site is built by Cys226, Cys229, Cys248, and Cys251. A zinc finger-like region spans residues 226–251 (CRRCRSYMNPFVHFNQDGRRWKCNIC).

This sequence belongs to the SEC23/SEC24 family. SEC24 subfamily. The COPII coat is composed of at least 5 proteins: the SEC23/24 complex, the SEC13/31 complex, and the protein SAR1. Golgi apparatus membrane; Peripheral membrane protein; Cytoplasmic side.

The protein localises to the cytoplasm. It localises to the cytoplasmic vesicle. It is found in the COPII-coated vesicle membrane. The protein resides in the endoplasmic reticulum membrane. Its subcellular location is the golgi apparatus membrane. Its function is as follows. Component of the coat protein complex II (COPII) which promotes the formation of transport vesicles from the endoplasmic reticulum (ER). The coat has two main functions, the physical deformation of the endoplasmic reticulum membrane into vesicles and the selection of cargo molecules. This Naumovozyma castellii (Yeast) protein is Protein transport protein SEC24-1 (SEC241).